A 65-amino-acid chain; its full sequence is Large ribosomal subunit protein bL35 (65 aa).

The segment covering 1–15 (MPKMKTKKSASKRFQ) has biased composition (basic residues). The tract at residues 1–27 (MPKMKTKKSASKRFQVRGSGSIKRGQA) is disordered.

This sequence belongs to the bacterial ribosomal protein bL35 family.

The polypeptide is Large ribosomal subunit protein bL35 (Bordetella petrii (strain ATCC BAA-461 / DSM 12804 / CCUG 43448)).